Consider the following 141-residue polypeptide: Hemoglobin subunit alpha-D (141 aa).

A Globin domain is found at 1–141 (MLTADDKKLL…VAAVLAEKYR (141 aa)). Heme b contacts are provided by H58 and H87.

This sequence belongs to the globin family. Heterotetramer of two alpha-D chains and two beta chains. Red blood cells.

Involved in oxygen transport from the lung to the various peripheral tissues. In Anser anser anser (Western greylag goose), this protein is Hemoglobin subunit alpha-D (HBAD).